A 167-amino-acid chain; its full sequence is NAD(P)H-quinone oxidoreductase subunit I, chloroplastic (167 aa).

2 consecutive 4Fe-4S ferredoxin-type domains span residues 55–84 (GRIH…VDWK) and 95–124 (LNYS…MTEE). [4Fe-4S] cluster-binding residues include C64, C67, C70, C74, C104, C107, C110, and C114.

It belongs to the complex I 23 kDa subunit family. NDH is composed of at least 16 different subunits, 5 of which are encoded in the nucleus. The cofactor is [4Fe-4S] cluster.

The protein resides in the plastid. Its subcellular location is the chloroplast thylakoid membrane. The enzyme catalyses a plastoquinone + NADH + (n+1) H(+)(in) = a plastoquinol + NAD(+) + n H(+)(out). It catalyses the reaction a plastoquinone + NADPH + (n+1) H(+)(in) = a plastoquinol + NADP(+) + n H(+)(out). Functionally, NDH shuttles electrons from NAD(P)H:plastoquinone, via FMN and iron-sulfur (Fe-S) centers, to quinones in the photosynthetic chain and possibly in a chloroplast respiratory chain. The immediate electron acceptor for the enzyme in this species is believed to be plastoquinone. Couples the redox reaction to proton translocation, and thus conserves the redox energy in a proton gradient. This chain is NAD(P)H-quinone oxidoreductase subunit I, chloroplastic, found in Lobularia maritima (Sweet alyssum).